An 88-amino-acid chain; its full sequence is Small ribosomal subunit protein bS20 (88 aa).

This sequence belongs to the bacterial ribosomal protein bS20 family.

Binds directly to 16S ribosomal RNA. The protein is Small ribosomal subunit protein bS20 of Micrococcus luteus (strain ATCC 4698 / DSM 20030 / JCM 1464 / CCM 169 / CCUG 5858 / IAM 1056 / NBRC 3333 / NCIMB 9278 / NCTC 2665 / VKM Ac-2230) (Micrococcus lysodeikticus).